The following is a 138-amino-acid chain: DWGFLEKLLDQVQEHSTVVGKIWLTVLFIFRILILGLAGESVWGDEQSDFECNTAQPGCTNVCYDQAFPISHIPYWVLQFLFVSTPTLVYLGHVIYLSRREERLRQKEGELRALPDKDPRVERALAGIERQMAKISVA.

Residues 1-16 (DWGFLEKLLDQVQEHS) are Cytoplasmic-facing. The chain crosses the membrane as a helical span at residues 17-39 (TVVGKIWLTVLFIFRILILGLAG). Residues 40 to 74 (ESVWGDEQSDFECNTAQPGCTNVCYDQAFPISHIP) are Extracellular-facing. The helical transmembrane segment at 75–97 (YWVLQFLFVSTPTLVYLGHVIYL) threads the bilayer. The Cytoplasmic portion of the chain corresponds to 98–138 (SRREERLRQKEGELRALPDKDPRVERALAGIERQMAKISVA).

It belongs to the connexin family. Alpha-type (group II) subfamily. A connexon is composed of a hexamer of connexins.

It localises to the cell membrane. It is found in the cell junction. The protein localises to the gap junction. One gap junction consists of a cluster of closely packed pairs of transmembrane channels, the connexons, through which materials of low MW diffuse from one cell to a neighboring cell. The polypeptide is Gap junction alpha-4 protein (GJA4) (Sus scrofa (Pig)).